The chain runs to 117 residues: Early E3 13.3 kDa protein (117 aa).

The sequence is that of Early E3 13.3 kDa protein from Canine adenovirus serotype 1 (strain Glaxo) (CAdV-1).